The primary structure comprises 213 residues: ATP-dependent Clp protease proteolytic subunit (213 aa).

The Nucleophile role is filled by serine 114. Residue histidine 139 is part of the active site.

The protein belongs to the peptidase S14 family. Fourteen ClpP subunits assemble into 2 heptameric rings which stack back to back to give a disk-like structure with a central cavity, resembling the structure of eukaryotic proteasomes.

It is found in the cytoplasm. The enzyme catalyses Hydrolysis of proteins to small peptides in the presence of ATP and magnesium. alpha-casein is the usual test substrate. In the absence of ATP, only oligopeptides shorter than five residues are hydrolyzed (such as succinyl-Leu-Tyr-|-NHMec, and Leu-Tyr-Leu-|-Tyr-Trp, in which cleavage of the -Tyr-|-Leu- and -Tyr-|-Trp bonds also occurs).. Its function is as follows. Cleaves peptides in various proteins in a process that requires ATP hydrolysis. Has a chymotrypsin-like activity. Plays a major role in the degradation of misfolded proteins. The sequence is that of ATP-dependent Clp protease proteolytic subunit from Pseudomonas putida (strain GB-1).